The chain runs to 476 residues: Bifunctional protein HldE (476 aa).

The ribokinase stretch occupies residues 1–319; it reads MKVSLPAFEK…RALSVNHGES (319 aa). Residue 195 to 198 participates in ATP binding; it reads NMGE. The active site involves Asp264. Residues 345–476 form a cytidylyltransferase region; it reads MTNGCFDILH…SIIENIMANQ (132 aa).

The protein in the N-terminal section; belongs to the carbohydrate kinase PfkB family. It in the C-terminal section; belongs to the cytidylyltransferase family. As to quaternary structure, homodimer.

The enzyme catalyses D-glycero-beta-D-manno-heptose 7-phosphate + ATP = D-glycero-beta-D-manno-heptose 1,7-bisphosphate + ADP + H(+). It catalyses the reaction D-glycero-beta-D-manno-heptose 1-phosphate + ATP + H(+) = ADP-D-glycero-beta-D-manno-heptose + diphosphate. The protein operates within nucleotide-sugar biosynthesis; ADP-L-glycero-beta-D-manno-heptose biosynthesis; ADP-L-glycero-beta-D-manno-heptose from D-glycero-beta-D-manno-heptose 7-phosphate: step 1/4. It participates in nucleotide-sugar biosynthesis; ADP-L-glycero-beta-D-manno-heptose biosynthesis; ADP-L-glycero-beta-D-manno-heptose from D-glycero-beta-D-manno-heptose 7-phosphate: step 3/4. Functionally, catalyzes the phosphorylation of D-glycero-D-manno-heptose 7-phosphate at the C-1 position to selectively form D-glycero-beta-D-manno-heptose-1,7-bisphosphate. Its function is as follows. Catalyzes the ADP transfer from ATP to D-glycero-beta-D-manno-heptose 1-phosphate, yielding ADP-D-glycero-beta-D-manno-heptose. The protein is Bifunctional protein HldE of Shewanella sediminis (strain HAW-EB3).